Reading from the N-terminus, the 104-residue chain is uncharacterized protein (104 aa).

Positions Met-1 to Gly-23 are cleaved as a signal peptide.

This is an uncharacterized protein from Lactobacillus helveticus (Lactobacillus suntoryeus).